The chain runs to 258 residues: tRNA pseudouridine synthase A (258 aa).

Asp52 serves as the catalytic Nucleophile. Tyr110 provides a ligand contact to substrate.

Belongs to the tRNA pseudouridine synthase TruA family. As to quaternary structure, homodimer.

The enzyme catalyses uridine(38/39/40) in tRNA = pseudouridine(38/39/40) in tRNA. Formation of pseudouridine at positions 38, 39 and 40 in the anticodon stem and loop of transfer RNAs. This is tRNA pseudouridine synthase A from Francisella tularensis subsp. novicida (strain U112).